Reading from the N-terminus, the 107-residue chain is Nitrogenase-stabilizing/protective protein NifW (107 aa).

This sequence belongs to the NifW family. In terms of assembly, homotrimer; associates with NifD.

In terms of biological role, may protect the nitrogenase Fe-Mo protein from oxidative damage. This Gloeothece citriformis (strain PCC 7424) (Cyanothece sp. (strain PCC 7424)) protein is Nitrogenase-stabilizing/protective protein NifW.